The following is a 224-amino-acid chain: Triosephosphate isomerase (224 aa).

9-11 (NFK) is a binding site for substrate. His93 acts as the Electrophile in catalysis. The active-site Proton acceptor is Glu141. Residues Ile146, Gly181, and 202–203 (AS) contribute to the substrate site.

The protein belongs to the triosephosphate isomerase family. As to quaternary structure, homotetramer; dimer of dimers.

The protein resides in the cytoplasm. The catalysed reaction is D-glyceraldehyde 3-phosphate = dihydroxyacetone phosphate. Its pathway is carbohydrate biosynthesis; gluconeogenesis. The protein operates within carbohydrate degradation; glycolysis; D-glyceraldehyde 3-phosphate from glycerone phosphate: step 1/1. Involved in the gluconeogenesis. Catalyzes stereospecifically the conversion of dihydroxyacetone phosphate (DHAP) to D-glyceraldehyde-3-phosphate (G3P). In Pyrobaculum arsenaticum (strain DSM 13514 / JCM 11321 / PZ6), this protein is Triosephosphate isomerase.